The chain runs to 296 residues: Biliverdin reductase A (296 aa).

Positions 1 to 2 (MN) are excised as a propeptide. NADP(+) contacts are provided by residues 16–19 (VGRA), 44–46 (SRR), 77–80 (SSSH), and Y98. Residue T174 is modified to Phosphothreonine. Phosphoserine occurs at positions 178 and 230. An N6-acetyllysine mark is found at K248 and K253. The Zn(2+) site is built by H280, C281, C292, and C293.

It belongs to the Gfo/Idh/MocA family. Biliverdin reductase subfamily. As to quaternary structure, monomer. The cofactor is Zn(2+). In terms of tissue distribution, liver.

It is found in the cytoplasm. The protein resides in the cytosol. The catalysed reaction is (4Z,15Z)-bilirubin IXalpha + NAD(+) = biliverdin IXalpha + NADH + H(+). It catalyses the reaction (4Z,15Z)-bilirubin IXalpha + NADP(+) = biliverdin IXalpha + NADPH + H(+). The protein operates within porphyrin-containing compound metabolism; protoheme degradation. In terms of biological role, reduces the gamma-methene bridge of the open tetrapyrrole, biliverdin IXalpha, to bilirubin with the concomitant oxidation of a NADH or NADPH cofactor. Does not reduce bilirubin IXbeta. Uses the reactants NADH or NADPH depending on the pH; NADH is used at the acidic pH range (6-6.9) and NADPH at the alkaline range (8.5-8.7). NADPH, however, is the probable reactant in biological systems. The protein is Biliverdin reductase A of Homo sapiens (Human).